A 473-amino-acid chain; its full sequence is Serine palmitoyltransferase 1 (473 aa).

Topologically, residues 1–15 (MATATEQWVLVEMVQ) are lumenal. The segment at 1-66 (MATATEQWVL…KEELIEEWQP (66 aa)) is interaction with SPTLC2. The helical transmembrane segment at 16–36 (ALYEAPAYHLILEGILILWII) threads the bilayer. Residues 37–473 (RLLFSKTYKL…IKEVAQAVLL (437 aa)) are Cytoplasmic-facing. Tyr164 carries the phosphotyrosine; by ABL modification.

This sequence belongs to the class-II pyridoxal-phosphate-dependent aminotransferase family. Component of the serine palmitoyltransferase (SPT) complex, which is also composed of SPTLC2 or SPTLC3 and SPTSSA or SPTSSB. The heterodimer with SPTLC2 or SPTLC3 forms the catalytic core of the enzyme, while SPTSSA or SPTSSB subunits determine substrate specificity. SPT also interacts with ORMDL proteins, especially ORMDL3, which negatively regulate SPT activity in the presence of ceramides. Forms dimers of heterodimers with SPTLC2. Interacts with RTN4. The cofactor is pyridoxal 5'-phosphate. Phosphorylation at Tyr-164 inhibits activity and promotes cell survival.

Its subcellular location is the endoplasmic reticulum membrane. The enzyme catalyses L-serine + hexadecanoyl-CoA + H(+) = 3-oxosphinganine + CO2 + CoA. It catalyses the reaction octadecanoyl-CoA + L-serine + H(+) = 3-oxoeicosasphinganine + CO2 + CoA. The catalysed reaction is tetradecanoyl-CoA + L-serine + H(+) = 3-oxohexadecasphinganine + CO2 + CoA. It carries out the reaction dodecanoyl-CoA + L-serine + H(+) = 3-oxotetradecasphinganine + CO2 + CoA. The protein operates within lipid metabolism; sphingolipid metabolism. Its activity is regulated as follows. SPT complex catalytic activity is negatively regulated by ORMDL proteins, including ORMDL3, in the presence of ceramides. This mechanism allows to maintain ceramide levels at sufficient concentrations for the production of complex sphingolipids, but which prevents the accumulation of ceramides to levels that trigger apoptosis. Functionally, component of the serine palmitoyltransferase multisubunit enzyme (SPT) that catalyzes the initial and rate-limiting step in sphingolipid biosynthesis by condensing L-serine and activated acyl-CoA (most commonly palmitoyl-CoA) to form long-chain bases. The SPT complex is also composed of SPTLC2 or SPTLC3 and SPTSSA or SPTSSB. Within this complex, the heterodimer with SPTLC2 or SPTLC3 forms the catalytic core. The composition of the serine palmitoyltransferase (SPT) complex determines the substrate preference. The SPTLC1-SPTLC2-SPTSSA complex shows a strong preference for C16-CoA substrate, while the SPTLC1-SPTLC3-SPTSSA isozyme uses both C14-CoA and C16-CoA as substrates, with a slight preference for C14-CoA. The SPTLC1-SPTLC2-SPTSSB complex shows a strong preference for C18-CoA substrate, while the SPTLC1-SPTLC3-SPTSSB isozyme displays an ability to use a broader range of acyl-CoAs, without apparent preference. Required for adipocyte cell viability and metabolic homeostasis. The protein is Serine palmitoyltransferase 1 (SPTLC1) of Macaca fascicularis (Crab-eating macaque).